A 779-amino-acid polypeptide reads, in one-letter code: Transcription activator of gluconeogenesis BDCG_02812 (779 aa).

The segment at 1–70 (MTASTRNGSP…NAKDPLRPRR (70 aa)) is disordered. Positions 25-61 (KSMTTTPANPPETKSQTNGKGSGTAQSSQKPASTSAN) are enriched in polar residues. Positions 77 to 105 (CFACQRAHLTCGDERPCQRCIKRGLQDAC) form a DNA-binding region, zn(2)-C6 fungal-type. 6 disordered regions span residues 135-163 (QANT…QSVS), 202-239 (SVFH…SVSG), 285-344 (GAGD…ANPR), 401-421 (TNLM…PGLK), 559-590 (GSSL…PHTG), and 655-732 (FHGK…QTWG). Residues 202–226 (SVFHAQSPSSTQNFDLSSNPQTQNL) show a composition bias toward polar residues. The segment covering 227 to 238 (SSAMSQTASSVS) has biased composition (low complexity). Composition is skewed to polar residues over residues 291–322 (PSDS…NQSP), 333–344 (WNPTGQGQANPR), and 401–416 (TNLM…SRIS). A compositionally biased stretch (low complexity) spans 560–572 (SSLSSASSVRGSS). A compositionally biased stretch (polar residues) spans 573–586 (TFTPRNNNTHNSID). A compositionally biased stretch (low complexity) spans 672 to 719 (TGTTTSGDVATTTATGTSTSNGANANTNGNNTNPNDPSSAASSSASSA). Positions 720–729 (LQGPQQSPRQ) are enriched in polar residues.

This sequence belongs to the ERT1/acuK family.

The protein resides in the nucleus. Its function is as follows. Transcription factor which regulates nonfermentable carbon utilization. Activator of gluconeogenetic genes. The protein is Transcription activator of gluconeogenesis BDCG_02812 of Ajellomyces dermatitidis (strain ER-3 / ATCC MYA-2586) (Blastomyces dermatitidis).